Reading from the N-terminus, the 52-residue chain is Eukaryotic translation initiation factor 2 subunit 1 (52 aa).

One can recognise an S1 motif domain in the interval 16–52 (EDVVMVNVRSIAEMGAYVSLLEYNNIEGRILLSELSR). The residue at position 48 (Ser-48) is a Phosphoserine; by HRI. Position 51 is a phosphoserine (Ser-51).

Belongs to the eIF-2-alpha family. In terms of assembly, eukaryotic translation initiation factor 2 eIF2 is a heterotrimeric complex composed of an alpha (EIF2S1), a beta (EIF2S2) and a gamma (EIF2S3) chain. eIF2 is member of the 43S pre-initiation complex (43S PIC). eIF2 forms a complex with at least CELF1/CUGBP1, CALR, CALR3, EIF2S1, EIF2S2, HSP90B1 and HSPA5. Interaction with METAP2 protects EIF2S1 from inhibitory phosphorylation. Interacts with ABCF1. Associates with ribosomes. Interacts with DDX3X in an RNA-independent manner. In terms of processing, phosphorylation at Ser-48 and Ser-51 stabilizes the eIF-2/GDP/eIF2B complex and prevents GDP/GTP exchange reaction, thus impairing the recycling of eIF-2 between successive rounds of initiation and leading to global inhibition of translation, while concomitantly initiating the preferential translation of integrated stress response (ISR)-specific mRNAs. Substrate for at least 4 kinases: EIF2AK1/HRI, EIF2AK2/PKR, EIF2AK3/PERK and EIF2AK4/GCN2. Phosphorylation on Ser-51 by the EIF2AK4/GCN2 protein kinase occurs in response to amino acid starvation and UV irradiation. Phosphorylation at Ser-51 by the EIF2AK3/PERK protein kinase occurs in response to the unfolded protein response. Phosphorylation at Ser-51 by EIF2AK1/HRI in response to mitochondrial damage promotes relocalization to the mitochondrial surface.

The protein localises to the cytoplasm. It localises to the stress granule. The protein resides in the cytosol. Its subcellular location is the mitochondrion. Its activity is regulated as follows. Activity is regulated by phosphorylation at Ser-49 and Ser-52, which stabilizes the eIF2/GDP/eIF2B complex and prevents the eIF2B-mediated exchange of GDP for GTP, thereby preventing the formation of the 43S pre-initiation complex (43S PIC). This results in the global attenuation of 5' cap-dependent protein synthesis and concomitant translation of ISR-specific mRNAs that contain a short upstream open reading frame (uORF) in their 5' UTR, such as ATF4, ATF5, DDIT3/CHOP and PPP1R15A/GADD34. Its function is as follows. Member of the eIF2 complex that functions in the early steps of protein synthesis by forming a ternary complex with GTP and initiator tRNA. This complex binds to a 40S ribosomal subunit, followed by mRNA binding to form a 43S pre-initiation complex. Junction of the 60S ribosomal subunit to form the 80S initiation complex is preceded by hydrolysis of the GTP bound to eIF2 and release of an eIF2-GDP binary complex. In order for eIF2 to recycle and catalyze another round of initiation, the GDP bound to eIF2 must exchange with GTP by way of a reaction catalyzed by eIF2B. EIF2S1/eIF2-alpha is a key component of the integrated stress response (ISR), required for adaptation to various stress: phosphorylation by metabolic-stress sensing protein kinases (EIF2AK1/HRI, EIF2AK2/PKR, EIF2AK3/PERK and EIF2AK4/GCN2) in response to stress converts EIF2S1/eIF2-alpha in a global protein synthesis inhibitor, leading to a attenuation of cap-dependent translation, while concomitantly initiating the preferential translation of ISR-specific mRNAs, such as the transcriptional activators ATF4 and QRICH1, and hence allowing ATF4- and QRICH1-mediated reprogramming. EIF2S1/eIF2-alpha also acts as an activator of mitophagy in response to mitochondrial damage: phosphorylation by EIF2AK1/HRI promotes relocalization to the mitochondrial surface, thereby triggering PRKN-independent mitophagy. The sequence is that of Eukaryotic translation initiation factor 2 subunit 1 (EIF2S1) from Oryctolagus cuniculus (Rabbit).